Consider the following 431-residue polypeptide: Gamma-glutamyl phosphate reductase (431 aa).

Belongs to the gamma-glutamyl phosphate reductase family.

Its subcellular location is the cytoplasm. It catalyses the reaction L-glutamate 5-semialdehyde + phosphate + NADP(+) = L-glutamyl 5-phosphate + NADPH + H(+). It functions in the pathway amino-acid biosynthesis; L-proline biosynthesis; L-glutamate 5-semialdehyde from L-glutamate: step 2/2. Catalyzes the NADPH-dependent reduction of L-glutamate 5-phosphate into L-glutamate 5-semialdehyde and phosphate. The product spontaneously undergoes cyclization to form 1-pyrroline-5-carboxylate. The protein is Gamma-glutamyl phosphate reductase of Beijerinckia indica subsp. indica (strain ATCC 9039 / DSM 1715 / NCIMB 8712).